A 711-amino-acid polypeptide reads, in one-letter code: Polyribonucleotide nucleotidyltransferase (711 aa).

Positions 486 and 492 each coordinate Mg(2+). One can recognise a KH domain in the interval 553–612 (PRIHTIKINPDKIKDVIGKGGSVIRALTEETGTTIEIEDDGTVKIAATDGDKAQHAIRRI). The 69-residue stretch at 622–690 (GRIYNGKVTR…RQGRVRLSIK (69 aa)) folds into the S1 motif domain. A disordered region spans residues 691-711 (EATEQTPSAAAPEAPVAEQGE). The segment covering 699–711 (AAAPEAPVAEQGE) has biased composition (low complexity).

It belongs to the polyribonucleotide nucleotidyltransferase family. Component of the RNA degradosome, which is a multiprotein complex involved in RNA processing and mRNA degradation. The cofactor is Mg(2+).

It is found in the cytoplasm. The catalysed reaction is RNA(n+1) + phosphate = RNA(n) + a ribonucleoside 5'-diphosphate. Functionally, involved in mRNA degradation. Catalyzes the phosphorolysis of single-stranded polyribonucleotides processively in the 3'- to 5'-direction. The chain is Polyribonucleotide nucleotidyltransferase from Klebsiella pneumoniae (strain 342).